The primary structure comprises 384 residues: Dual-specificity RNA methyltransferase RlmN (384 aa).

The active-site Proton acceptor is the glutamate 105. A Radical SAM core domain is found at 111 to 350 (EDDRATLCVS…TIVRKTRGDD (240 aa)). Cysteine 118 and cysteine 355 are joined by a disulfide. [4Fe-4S] cluster-binding residues include cysteine 125, cysteine 129, and cysteine 132. S-adenosyl-L-methionine contacts are provided by residues 179–180 (GE), serine 211, 233–235 (SLH), and asparagine 312. Cysteine 355 acts as the S-methylcysteine intermediate in catalysis.

It belongs to the radical SAM superfamily. RlmN family. [4Fe-4S] cluster serves as cofactor.

It localises to the cytoplasm. It carries out the reaction adenosine(2503) in 23S rRNA + 2 reduced [2Fe-2S]-[ferredoxin] + 2 S-adenosyl-L-methionine = 2-methyladenosine(2503) in 23S rRNA + 5'-deoxyadenosine + L-methionine + 2 oxidized [2Fe-2S]-[ferredoxin] + S-adenosyl-L-homocysteine. The enzyme catalyses adenosine(37) in tRNA + 2 reduced [2Fe-2S]-[ferredoxin] + 2 S-adenosyl-L-methionine = 2-methyladenosine(37) in tRNA + 5'-deoxyadenosine + L-methionine + 2 oxidized [2Fe-2S]-[ferredoxin] + S-adenosyl-L-homocysteine. Functionally, specifically methylates position 2 of adenine 2503 in 23S rRNA and position 2 of adenine 37 in tRNAs. m2A2503 modification seems to play a crucial role in the proofreading step occurring at the peptidyl transferase center and thus would serve to optimize ribosomal fidelity. This Escherichia coli O157:H7 protein is Dual-specificity RNA methyltransferase RlmN.